The primary structure comprises 95 residues: PIK3R3 upstream open reading frame protein (95 aa).

Positions 1–27 (MGPSRLVRGPRPQGMRSPYRRPGMGWP) are disordered.

This chain is PIK3R3 upstream open reading frame protein, found in Homo sapiens (Human).